The chain runs to 407 residues: tRNA (guanine(9)-N1)-methyltransferase (407 aa).

Residues 1-19 show a composition bias toward basic and acidic residues; that stretch reads MDLDPAHKPSQAEETKEQG. Disordered regions lie at residues 1-105 and 220-256; these read MDLD…VRKR and ENMI…PRPE. The segment covering 20–32 has biased composition (low complexity); that stretch reads NEQGQVEQNQAQQ. Positions 91-103 are enriched in basic residues; that stretch reads LKRKDSRIARKVR. The SAM-dependent MTase TRM10-type domain occupies 120–356; the sequence is ANKQKPPSVN…SVIPKRKGGK (237 aa). Residues 263–264, Gly-283, 287–291, Cys-295, Leu-309, and 321–323 each bind S-adenosyl-L-methionine; these read LS, DKNRE, and TVL. Residue Asp-287 is the Proton acceptor of the active site. Residues 353–407 are disordered; the sequence is KGGKLKEQQGASGETQETEEAEAEDPEEENEETKDPDAEASASKQNTPKVEVTSK. Residues 368–386 show a composition bias toward acidic residues; sequence QETEEAEAEDPEEENEETK. A compositionally biased stretch (polar residues) spans 394-407; the sequence is ASKQNTPKVEVTSK.

Belongs to the class IV-like SAM-binding methyltransferase superfamily. TRM10 family. Monomer.

The protein localises to the cytoplasm. It is found in the nucleus. It catalyses the reaction guanosine(9) in tRNA + S-adenosyl-L-methionine = N(1)-methylguanosine(9) in tRNA + S-adenosyl-L-homocysteine + H(+). Functionally, S-adenosyl-L-methionine-dependent guanine N(1)-methyltransferase that catalyzes the formation of N(1)-methylguanine at position 9 (m1G9) in cytoplasmic tRNA. This Gibberella zeae (strain ATCC MYA-4620 / CBS 123657 / FGSC 9075 / NRRL 31084 / PH-1) (Wheat head blight fungus) protein is tRNA (guanine(9)-N1)-methyltransferase.